Here is a 62-residue protein sequence, read N- to C-terminus: UPF0434 protein azo1471 (62 aa).

It belongs to the UPF0434 family.

This is UPF0434 protein azo1471 from Azoarcus sp. (strain BH72).